Consider the following 96-residue polypeptide: MRTLVILAAILLVALQAQAEPLQARTDEATAAQEQIPTDNPEVVVSLAWDESLAPKDSVPGLRKNMACYCRIPACLAGERRYGTCFYLRRVWAFCC.

Residues 1–19 (MRTLVILAAILLVALQAQA) form the signal peptide. The propeptide occupies 20–66 (EPLQARTDEATAAQEQIPTDNPEVVVSLAWDESLAPKDSVPGLRKNM). 3 disulfide bridges follow: cysteine 68-cysteine 96, cysteine 70-cysteine 85, and cysteine 75-cysteine 95.

Belongs to the alpha-defensin family.

The protein localises to the secreted. In terms of biological role, probable antibiotic and antifungal activity. The protein is Neutrophil defensin 8 of Macaca mulatta (Rhesus macaque).